A 201-amino-acid polypeptide reads, in one-letter code: Homeobox protein ceh-28 (201 aa).

Residues 72-84 (SYYSSPSQNQRSY) show a composition bias toward polar residues. The disordered stretch occupies residues 72-94 (SYYSSPSQNQRSYQNHRQHSNPD). A DNA-binding region (homeobox) is located at residues 104 to 163 (KRKPRVLFTQHQVNELEERFKKQRYVTATEREELAQCLGLTATQVKIWFQNRRYKCKRLA).

The protein belongs to the NK-2 homeobox family.

The protein localises to the nucleus. Its function is as follows. Probable transcription factor that regulates neuronal differention, including synapse assembly of the cholinergic motor neuron M4. Activates expression of growth factor, neuropeptide and transcription factor genes, such as TGF-beta dbl-1, FMRFamide-like flp-5 and transcription repressor zag-1, in the M4 neuron. Required for pharynx peristalsis. This Caenorhabditis elegans protein is Homeobox protein ceh-28.